A 204-amino-acid polypeptide reads, in one-letter code: Small ribosomal subunit protein uS4 (204 aa).

An S4 RNA-binding domain is found at 93-156 (SRLSSVLYHS…AKIPILIEAE (64 aa)).

It belongs to the universal ribosomal protein uS4 family. Part of the 30S ribosomal subunit. Contacts protein S5. The interaction surface between S4 and S5 is involved in control of translational fidelity.

In terms of biological role, one of the primary rRNA binding proteins, it binds directly to 16S rRNA where it nucleates assembly of the body of the 30S subunit. With S5 and S12 plays an important role in translational accuracy. This Wolbachia pipientis subsp. Culex pipiens (strain wPip) protein is Small ribosomal subunit protein uS4.